The chain runs to 137 residues: Small ribosomal subunit protein uS11 (137 aa).

Residues 1–30 (MAQAKKGGAPKKGQKTRRREKKNVPHGAAH) are disordered. Residues 8 to 21 (GAPKKGQKTRRREK) show a composition bias toward basic residues.

Belongs to the universal ribosomal protein uS11 family. As to quaternary structure, part of the 30S ribosomal subunit. Interacts with proteins S7 and S18. Binds to IF-3.

In terms of biological role, located on the platform of the 30S subunit, it bridges several disparate RNA helices of the 16S rRNA. Forms part of the Shine-Dalgarno cleft in the 70S ribosome. In Mycolicibacterium vanbaalenii (strain DSM 7251 / JCM 13017 / BCRC 16820 / KCTC 9966 / NRRL B-24157 / PYR-1) (Mycobacterium vanbaalenii), this protein is Small ribosomal subunit protein uS11.